The sequence spans 595 residues: Solute carrier family 13 member 1 (595 aa).

Transmembrane regions (helical) follow at residues 13-33 (FLLV…IRSK), 40-60 (ILFV…ITAL), 77-97 (VASA…CLAT), 113-133 (VMMV…STAF), and 134-154 (LSMW…VEAV). Asn-174 carries an N-linked (GlcNAc...) asparagine glycan. The disordered stretch occupies residues 190–218 (QETNERKEKTKPALGSSNDKGKVSSKMET). The span at 208-218 (DKGKVSSKMET) shows a compositional bias: basic and acidic residues. 8 consecutive transmembrane segments (helical) span residues 239–259 (LMCL…ITGT), 283–303 (SWFL…WIWL), 348–368 (IVTL…DPGF), 381–401 (GYVT…LIPA), 464–484 (PLGS…VTSL), 491–511 (PATI…IHVN), 512–532 (PLHI…LPVA), and 553–573 (AGLG…FTWI). N-linked (GlcNAc...) asparagine glycosylation occurs at Asn-591.

It belongs to the SLC13A/DASS transporter (TC 2.A.47) family. NADC subfamily. In terms of tissue distribution, kidney and intestine.

The protein localises to the apical cell membrane. The catalysed reaction is sulfate(out) + 3 Na(+)(out) = sulfate(in) + 3 Na(+)(in). The enzyme catalyses selenate(out) + 3 Na(+)(out) = selenate(in) + 3 Na(+)(in). It carries out the reaction thiosulfate(out) + 3 Na(+)(out) = thiosulfate(in) + 3 Na(+)(in). In terms of biological role, sodium:sulfate symporter that mediates sulfate reabsorption in the kidney and small intestine. Can also mediate the transport of selenate and thiosulfate. This chain is Solute carrier family 13 member 1 (Slc13a1), found in Rattus norvegicus (Rat).